The following is a 212-amino-acid chain: MTSSTTTAVPGLLLAGGLARRMGGGDKPMRVIAGRTLLAHVITRLAPQCEPLVLNANGDPARFAAYGLTVVPDDVPGFAGPLAGILAGLDWVASHRPAAQRMISVAADCPFLPRDLVARLTAACMAEDTDLALAASGGHTHPVIGLWPVRLREDLRHALVSEDIRKVTRFTARYKVATVTWPVVPRDPFFNANTAEDLAEAERLAAMEDRDA.

GTP contacts are provided by residues 14–16 (LAG), Lys-27, Asn-55, Asp-73, and Asp-108. Asp-108 lines the Mg(2+) pocket.

It belongs to the MobA family. Monomer. It depends on Mg(2+) as a cofactor.

The protein localises to the cytoplasm. The catalysed reaction is Mo-molybdopterin + GTP + H(+) = Mo-molybdopterin guanine dinucleotide + diphosphate. Transfers a GMP moiety from GTP to Mo-molybdopterin (Mo-MPT) cofactor (Moco or molybdenum cofactor) to form Mo-molybdopterin guanine dinucleotide (Mo-MGD) cofactor. The protein is Molybdenum cofactor guanylyltransferase of Bradyrhizobium sp. (strain ORS 278).